Here is a 234-residue protein sequence, read N- to C-terminus: Cyclo(L-leucyl-L-leucyl) synthase (234 aa).

S28 acts as the Nucleophile in catalysis. Substrate-binding positions include 171-175, Y195, and 200-201; these read YVLAE and EL.

This sequence belongs to the CDPS family.

It carries out the reaction 2 L-leucyl-tRNA(Leu) = cyclo(L-leucyl-L-leucyl) + 2 tRNA(Leu) + 2 H(+). Its function is as follows. It uses activated amino acids in the form of aminoacyl-tRNAs (aa-tRNAs) as substrates to catalyze the ATP-independent formation of cyclodipeptides which are intermediates in diketopiperazine (DKP) biosynthetic pathways. Catalyzes the formation of cyclo(L-Leu-L-Leu) (cLL) from L-leucyl-tRNA(Leu). Can incorporate various nonpolar residues, such as L-phenylalanine, L-leucine and L-methionine, into cyclodipeptides. This chain is Cyclo(L-leucyl-L-leucyl) synthase, found in Staphylococcus haemolyticus (strain JCSC1435).